We begin with the raw amino-acid sequence, 227 residues long: Exodeoxyribonuclease (227 aa).

It catalyses the reaction Exonucleolytic cleavage in the 3'- to 5'-direction to yield nucleoside 5'-phosphates.. Functionally, 3'-5' exonuclease that preferentially uses ssDNA as substrate. Plays a role in group I intron homing. May play a role in the final step of host DNA degradation, by scavenging DNA into mononucleotides. The protein is Exodeoxyribonuclease (dexA) of Escherichia coli (Bacteriophage T4).